A 191-amino-acid polypeptide reads, in one-letter code: Ribosome maturation factor RimP (191 aa).

This sequence belongs to the RimP family.

The protein resides in the cytoplasm. Functionally, required for maturation of 30S ribosomal subunits. The chain is Ribosome maturation factor RimP from Caulobacter vibrioides (strain NA1000 / CB15N) (Caulobacter crescentus).